The primary structure comprises 347 residues: MAEEPIRLTQYSHGAGUGCKISPKVLGTILHSELEKFYDPNLLVGNETADDAAVYDLGNGTAIISTTDFFMPIVDDPFDFGRIAATNAISDIFAMGGKPIMGIAILGFPTNVLPAEVAQKIVDGGRFACHQAGIALAGGHSIDSPEPIFGLAVTGVIDTEKVKRNASAKSGCKLYMTKPLGIGILTTAEKKGKLKPEHQGLATAAMCQMNSIGSQFSQVDGVTAMTDVTGFGLLGHLIEICEGSNLSAVVFSDKIKTLDGVKDYIAQGCVPGGTGRNFESYGHKVGALTEEQKAILCDPQTSGGLLVAVEPNSVQTIIEIAKDTGIDLYEVGKLKPKSESDIVVEVK.

The active site involves selenocysteine 17. Residue selenocysteine 17 is a non-standard amino acid, selenocysteine. ATP is bound by residues lysine 20 and 48–50 (TAD). Aspartate 51 is a Mg(2+) binding site. Residues aspartate 68, aspartate 91, and 139-141 (GHS) each bind ATP. Residue aspartate 91 participates in Mg(2+) binding. Aspartate 227 provides a ligand contact to Mg(2+).

Belongs to the selenophosphate synthase 1 family. Class I subfamily. As to quaternary structure, homodimer. Requires Mg(2+) as cofactor.

The catalysed reaction is hydrogenselenide + ATP + H2O = selenophosphate + AMP + phosphate + 2 H(+). Its function is as follows. Synthesizes selenophosphate from selenide and ATP. The polypeptide is Selenide, water dikinase (Haemophilus influenzae (strain 86-028NP)).